Here is a 454-residue protein sequence, read N- to C-terminus: Allantoinase (454 aa).

6 residues coordinate Zn(2+): H60, H62, K147, H183, H239, and D312. Position 147 is an N6-carboxylysine (K147).

Belongs to the metallo-dependent hydrolases superfamily. Allantoinase family. Homotetramer. The cofactor is Zn(2+). Post-translationally, carboxylation allows a single lysine to coordinate two zinc ions.

It catalyses the reaction (S)-allantoin + H2O = allantoate + H(+). Its pathway is nitrogen metabolism; (S)-allantoin degradation; allantoate from (S)-allantoin: step 1/1. Its function is as follows. Catalyzes the conversion of allantoin (5-ureidohydantoin) to allantoic acid by hydrolytic cleavage of the five-member hydantoin ring. The sequence is that of Allantoinase from Rubrobacter xylanophilus (strain DSM 9941 / JCM 11954 / NBRC 16129 / PRD-1).